A 422-amino-acid polypeptide reads, in one-letter code: Trigger factor (422 aa).

The PPIase FKBP-type domain maps to 158 to 242 (GDFAVVSLES…VKGLRKKELP (85 aa)).

The protein belongs to the FKBP-type PPIase family. Tig subfamily.

Its subcellular location is the cytoplasm. It catalyses the reaction [protein]-peptidylproline (omega=180) = [protein]-peptidylproline (omega=0). Involved in protein export. Acts as a chaperone by maintaining the newly synthesized protein in an open conformation. Functions as a peptidyl-prolyl cis-trans isomerase. The polypeptide is Trigger factor (Solibacter usitatus (strain Ellin6076)).